A 344-amino-acid chain; its full sequence is Anthranilate phosphoribosyltransferase (344 aa).

Residues Gly-85, 88-89 (GD), Thr-93, 95-98 (NIST), 113-121 (KHGGRSVSS), and Ser-125 each bind 5-phospho-alpha-D-ribose 1-diphosphate. Gly-85 contributes to the anthranilate binding site. Ser-97 is a Mg(2+) binding site. Residue Arg-171 participates in anthranilate binding. Mg(2+)-binding residues include Asp-230 and Glu-231.

Belongs to the anthranilate phosphoribosyltransferase family. As to quaternary structure, homodimer. It depends on Mg(2+) as a cofactor.

The enzyme catalyses N-(5-phospho-beta-D-ribosyl)anthranilate + diphosphate = 5-phospho-alpha-D-ribose 1-diphosphate + anthranilate. It participates in amino-acid biosynthesis; L-tryptophan biosynthesis; L-tryptophan from chorismate: step 2/5. Functionally, catalyzes the transfer of the phosphoribosyl group of 5-phosphorylribose-1-pyrophosphate (PRPP) to anthranilate to yield N-(5'-phosphoribosyl)-anthranilate (PRA). The chain is Anthranilate phosphoribosyltransferase from Delftia acidovorans (strain DSM 14801 / SPH-1).